Reading from the N-terminus, the 366-residue chain is Molybdopterin synthase catalytic subunit (366 aa).

Residues 101–102 (HR), Lys-117, and 124–126 (KKE) each bind substrate.

The protein belongs to the MoaE family. MOCS2B subfamily. In terms of assembly, heterotetramer; composed of 2 small (Mocs2A) and 2 large (Mocs2B) subunits.

The protein resides in the cytoplasm. The catalysed reaction is 2 [molybdopterin-synthase sulfur-carrier protein]-C-terminal-Gly-aminoethanethioate + cyclic pyranopterin phosphate + H2O = molybdopterin + 2 [molybdopterin-synthase sulfur-carrier protein]-C-terminal Gly-Gly + 2 H(+). The protein operates within cofactor biosynthesis; molybdopterin biosynthesis. Catalytic subunit of the molybdopterin synthase complex, a complex that catalyzes the conversion of precursor Z into molybdopterin. Acts by mediating the incorporation of 2 sulfur atoms from thiocarboxylated Mocs2A into precursor Z to generate a dithiolene group. This Drosophila mojavensis (Fruit fly) protein is Molybdopterin synthase catalytic subunit.